Here is a 626-residue protein sequence, read N- to C-terminus: MSLEISGSKLIKAQIIDAPECSGVYKMLDVNKQVIYIGKAKILKKRLTNYIKSDLDNKTLRMISNTYFLEYIITNSEVEALLLEAQLIKKFQPKFNILLKDDKSFPFIKLSLDHDFPQLIKYRGKALSDGKFFGPFASNTQVNTTLTELQKIFKLRSCTDNYFNSRTRPCLQYEIKRCYAPCVGKINKEDYRELVMQVKDFLQCRTIALQANLSKKMQELSSQMRFEEAAEIRDRIKALSYVQLKSGILDVVRDADIIAIVHKNLHYCIEVSLYRAGQPYGAIPYFFSSTENSTHEEVLEYFLLQFYQKQQVPSEIIMNHEINSKENMIEAIKKINNISDLSITVPHKGGKAKLVQKAEVNALLSLEQYLKKSIKNTDIMFALKKLFDLPEIPERIEIYDNSHLQGMFAVGVMVVAGQIGFDKKEYRVFSLSSRSLTIGSEIELRDDRKGDDYGMLRQVLTRRFTRLKNEPHKLPSLMIIDGGKGHLTIVKEVMDKFEINIPFVCMSKGRDRNAGLEQLHMQGKEVLTLDKNLPIMKYLQILRDEAHNFAIKNHRLGRSRAIKISSLDEIDGIGETRKTALLHYFGSYKAVCNATIDELTKVKGISKSLASMIFNILNRKISLDNS.

The region spanning 20 to 97 is the GIY-YIG domain; that stretch reads ECSGVYKMLD…IKKFQPKFNI (78 aa). The UVR domain occupies 207 to 242; the sequence is IALQANLSKKMQELSSQMRFEEAAEIRDRIKALSYV.

This sequence belongs to the UvrC family. As to quaternary structure, interacts with UvrB in an incision complex.

Its subcellular location is the cytoplasm. The UvrABC repair system catalyzes the recognition and processing of DNA lesions. UvrC both incises the 5' and 3' sides of the lesion. The N-terminal half is responsible for the 3' incision and the C-terminal half is responsible for the 5' incision. The polypeptide is UvrABC system protein C (Rickettsia prowazekii (strain Madrid E)).